Consider the following 2476-residue polypeptide: Zonadhesin (2476 aa).

Positions 1–29 are cleaved as a signal peptide; that stretch reads MLGLPALAGPMAMPHPPLIPSTPTLLAFS. The Extracellular segment spans residues 30–2418; the sequence is FPGGFYMLLD…SPKKPEASNR (2389 aa). MAM domains are found at residues 31 to 144 and 147 to 312; these read PGGF…PCEE and PQCD…TCRG. N-linked (GlcNAc...) asparagine glycans are attached at residues Asn-109 and Asn-269. Disordered stretches follow at residues 313-332, 358-462, and 537-632; these read PSET…KPTV, PTVP…TERT, and ERTT…RTTI. Positions 319–687 are 53 X approximate heptapeptide repeats (mucin-like domain); it reads STEKPVAPTE…ATTVTPRTTI (369 aa). The span at 358–373 shows a compositional bias: low complexity; sequence PTVPTEKPTIPTEKST. Over residues 400 to 412 the composition is skewed to pro residues; sequence TTPPEGPAVPPKG. Over residues 423 to 433 the composition is skewed to basic and acidic residues; the sequence is HTEKSTVHTEK. Residues 451–462 show a composition bias toward low complexity; it reads PTKRTTTPTERT. The TIL 1 domain maps to 690–739; that stretch reads CPPNAHFERCACPVSCQSPTPNCELFCKPGCVCDPGFLFSGSHCVNASSC. Residues Asn-735, Asn-758, and Asn-833 are each glycosylated (N-linked (GlcNAc...) asparagine). The region spanning 740–794 is the VWFC 1 domain; the sequence is DCFYNDNYYKLGTDWFSPNCTEHCHCRPSSRMECQTFKCGTHTVCQLKNGQYGCH. In terms of domain architecture, VWFD 1 spans 799 to 976; sequence ATCSVYGDPH…TSEDADQQCE (178 aa). Cystine bridges form between Cys-801/Cys-936 and Cys-823/Cys-975. A disordered region spans residues 943-983; sequence SSNDNQKPDGSPAKDEKELGSSWQTSEDADQQCEENQVSPP. The TIL 2 domain occupies 1070-1123; the sequence is CPRNSRYTLCARLCPDTCHSEFSGRACKDRCVEGCECDPGFVLSGLQCVSRSEC. Residues 1124–1180 enclose the VWFC 2 domain; sequence GCLDSTAGYVKVGERWFKPGCRQLCICEGNNRTRCVLWRCQAQEFCGQQDGIYGCHA. Asn-1154 carries an N-linked (GlcNAc...) asparagine glycan. The 181-residue stretch at 1184–1364 folds into the VWFD 2 domain; the sequence is ATCTVSGDPH…INELSEPGCF (181 aa). 2 disulfides stabilise this stretch: Cys-1186–Cys-1324 and Cys-1208–Cys-1363. N-linked (GlcNAc...) asparagine glycans are attached at residues Asn-1329 and Asn-1448. Residues 1456-1511 enclose the TIL 3 domain; it reads CPSGSSYSTCANPCPATCLSLNNPSYCPSTLPCAEGCECQKGHILSGTSCVPLSQC. A VWFC 3 domain is found at 1512 to 1568; the sequence is GCTTQRGSYHPVGESWYTDNSCSRLCTCSAHNNISCRQASCKPSQMCWPQDGLIRCR. Asn-1544, Asn-1596, and Asn-1654 each carry an N-linked (GlcNAc...) asparagine glycan. A VWFD 3 domain is found at 1573-1751; the sequence is GVCRIPDTSH…RDKEIDPNCQ (179 aa). Cystine bridges form between Cys-1575/Cys-1712 and Cys-1597/Cys-1750. Over residues 1747–1759 the composition is skewed to basic and acidic residues; that stretch reads DPNCQEDDRKTEA. Positions 1747–1768 are disordered; that stretch reads DPNCQEDDRKTEAESQEQPSAN. An N-linked (GlcNAc...) asparagine glycan is attached at Asn-1843. A TIL 4 domain is found at 1851–1907; that stretch reads CSAHSVYTSCVPSCLPSCQDPEGQCTGAGAPSTCEEGCICEPGYVLSEQQCVARSQC. One can recognise a VWFC 4 domain in the interval 1908 to 1963; that stretch reads GCRDARGTFLPVGRFRLSSGCSQMCVCTAGAIECRPFTCPSGSQCEPNEDGKDFCQ. The N-linked (GlcNAc...) asparagine glycan is linked to Asn-1965. Residues 1968–2145 form the VWFD 4 domain; that stretch reads NLCSVFGDPH…WEVKAKEGHP (178 aa). Cys-1970 and Cys-2107 are oxidised to a cystine. N-linked (GlcNAc...) asparagine glycosylation is found at Asn-2122, Asn-2165, and Asn-2178. The TIL 5 domain maps to 2257 to 2310; that stretch reads CPANTVYQSCMTPCPASCATLAVPRACDGPCVEGCASLPGYIYSGAQSLPMAHC. The VWFC 5 domain maps to 2311–2365; it reads GCTNNGVYYQQGDSFVTENCSQRCTCASSGVLLCEPLSCRPGEICTLGNLTRGCF. Asn-2329 and Asn-2359 each carry an N-linked (GlcNAc...) asparagine glycan. One can recognise an EGF-like domain in the interval 2366-2402; sequence RDSPCLQNPCQNDGRCREQGTHFTCECELGYGGDLCT. 3 disulfide bridges follow: Cys-2370–Cys-2381, Cys-2375–Cys-2390, and Cys-2392–Cys-2401. A helical membrane pass occupies residues 2419-2439; it reads VAILLGMLMPTVLLVPAVTRV. The segment at 2438–2476 is disordered; it reads RVSRKRRRRRRPSRERTQSQNRGKRAGTDCAPEQAYKVA. A compositionally biased stretch (basic residues) spans 2439 to 2450; the sequence is VSRKRRRRRRPS. Over 2440–2476 the chain is Cytoplasmic; it reads SRKRRRRRRPSRERTQSQNRGKRAGTDCAPEQAYKVA.

Probably forms covalent oligomers. In terms of processing, the MAM domains and the mucin-like domains are missing from the zonadhesin that binds to the egg extracellular matrix. Processing might occur during sperm maturation and/or capacitation. In terms of tissue distribution, in testis, primarily in haploid spermatids. Not in lung, liver, heart, spleen, brain, kidney, epididymis.

The protein localises to the cell membrane. In terms of biological role, binds in a species-specific manner to the zona pellucida of the egg. May be involved in gamete recognition and/or signaling. The protein is Zonadhesin (ZAN) of Sus scrofa (Pig).